Consider the following 322-residue polypeptide: ATP-dependent 6-phosphofructokinase (322 aa).

Residues Gly-12, 73-74 (RF), and 103-106 (GDGT) each bind ATP. Asp-104 provides a ligand contact to Mg(2+). 126 to 128 (TID) provides a ligand contact to substrate. The active-site Proton acceptor is the Asp-128. ADP is bound at residue Arg-155. Substrate contacts are provided by residues Arg-163 and 170 to 172 (MGR). ADP is bound by residues 186–188 (GSE), Lys-212, and 214–216 (KPS). Residues Glu-223, Arg-245, and 251-254 (HTQR) each bind substrate.

It belongs to the phosphofructokinase type A (PFKA) family. ATP-dependent PFK group I subfamily. Prokaryotic clade 'B1' sub-subfamily. As to quaternary structure, homotetramer. It depends on Mg(2+) as a cofactor.

The protein resides in the cytoplasm. It carries out the reaction beta-D-fructose 6-phosphate + ATP = beta-D-fructose 1,6-bisphosphate + ADP + H(+). The protein operates within carbohydrate degradation; glycolysis; D-glyceraldehyde 3-phosphate and glycerone phosphate from D-glucose: step 3/4. With respect to regulation, allosterically activated by ADP and other diphosphonucleosides, and allosterically inhibited by phosphoenolpyruvate. Functionally, catalyzes the phosphorylation of D-fructose 6-phosphate to fructose 1,6-bisphosphate by ATP, the first committing step of glycolysis. This chain is ATP-dependent 6-phosphofructokinase, found in Mesomycoplasma hyopneumoniae (strain J / ATCC 25934 / NCTC 10110) (Mycoplasma hyopneumoniae).